The sequence spans 284 residues: Homeobox protein six1 (284 aa).

The segment at residues 124–183 (GEETSYCFKEKSRGVLREWYAHNPYPSPREKRELAEATGLTTTQVSNWFKNRRQRDRAAE) is a DNA-binding region (homeobox). The disordered stretch occupies residues 168 to 230 (VSNWFKNRRQ…SPPQSPDQNS (63 aa)). Residues 179–190 (DRAAEAKERENT) are compositionally biased toward basic and acidic residues. The span at 191–202 (ENNNTSTNKQNQ) shows a compositional bias: low complexity.

Belongs to the SIX/Sine oculis homeobox family.

The protein localises to the nucleus. Its subcellular location is the cytoplasm. Transcription factor that is involved in the regulation of cell proliferation, apoptosis and embryonic development. Depending on context, functions as a transcriptional repressor or activator. Required for the normal formation of pre-placodal ectoderm. This chain is Homeobox protein six1 (six1), found in Xenopus laevis (African clawed frog).